The following is a 3401-amino-acid chain: Genome polyprotein (3401 aa).

At 1-104 the chain is on the cytoplasmic side; that stretch reads MPVRPRNKPK…GRKKRRSMTH (104 aa). The propeptide at 101–117 is ER anchor for the capsid protein C, removed in mature form by serine protease NS3; that stretch reads SMTHGIILSLGVTMVIG. The chain crosses the membrane as a helical span at residues 105 to 125; it reads GIILSLGVTMVIGASLHHHGG. Residues 126 to 240 are Extracellular-facing; that stretch reads RYLLNVTHAD…GERQIQRIER (115 aa). Asn130 and Asn146 each carry an N-linked (GlcNAc...) asparagine; by host glycan. The chain crosses the membrane as a helical span at residues 241 to 261; sequence WMMRNPFYAAISLLLAWWVGS. At 262–266 the chain is on the cytoplasmic side; that stretch reads DIKQK. A helical membrane pass occupies residues 267–281; it reads VLIAFLVLAIGPAYS. The Extracellular portion of the chain corresponds to 282 to 725; the sequence is THCVGIPKRD…HTVFGNVFHS (444 aa). Disulfide bonds link Cys284–Cys311, Cys355–Cys386, Cys373–Cys397, Cys462–Cys564, and Cys581–Cys611. The fusion peptide stretch occupies residues 379-392; that stretch reads DRGWGNGCGLFGKG. Residues 726–746 form a helical membrane-spanning segment; the sequence is IFGGLSWITKIILGGMFLWLG. The Extracellular portion of the chain corresponds to 747-753; the sequence is VNSRNQT. Residues 754–774 traverse the membrane as a helical segment; sequence MCMVLMAVGGILLFMTLGVSG. At 775–1122 the chain is on the extracellular side; it reads EVGCSLDIKR…NVHEEHLVRS (348 aa). 6 disulfide bridges follow: Cys778–Cys789, Cys829–Cys916, Cys952–Cys997, Cys1054–Cys1103, Cys1065–Cys1087, and Cys1086–Cys1090. N-linked (GlcNAc...) asparagine; by host glycans are attached at residues Asn904 and Asn981. A helical membrane pass occupies residues 1123–1143; sequence WASAGTGMAESSLGLVALFLF. The Cytoplasmic segment spans residues 1144 to 1198; sequence TDIFARKRMTRKFMVIGCLGVLSVMIVGGFTALDLIRYIIVVGQHFASMNHGGDV. A helical membrane pass occupies residues 1199 to 1219; it reads AYLAIIAVGKLRPGLLMMYSF. The Lumenal segment spans residues 1220-1287; it reads KAAWSPKERV…PILALLTPLS (68 aa). A helical membrane pass occupies residues 1288 to 1308; that stretch reads MEIIRKTGIFACVGLLGLSLW. Topologically, residues 1309 to 1352 are cytoplasmic; it reads RGGDTTMRKGMPLLAGAATAASGLTRASLSVVFILCATAASRRS. The helical transmembrane segment at 1353 to 1373 threads the bilayer; sequence WPIGEIMAIVGIVGTGFGMAV. Residues 1374–1376 are Lumenal-facing; the sequence is NDQ. A helical transmembrane segment spans residues 1377-1397; the sequence is ASLAGPMLVFGLIMIVYATLG. The Cytoplasmic segment spans residues 1398–1447; the sequence is RADGLTLKRVGDITWEEEAVHSGSSTRYDVTLNEAGEFKLVHEEPVVWSH. Residues 1404–1443 form an interacts with and activates NS3 protease region; that stretch reads LKRVGDITWEEEAVHSGSSTRYDVTLNEAGEFKLVHEEPV. Positions 1448–1468 form an intramembrane region, helical; sequence VVFLVVALIAASVHPIALVVV. The Cytoplasmic segment spans residues 1469–2154; that stretch reads TIIWTYGKKH…ASTNAPEAVT (686 aa). A Peptidase S7 domain is found at 1481–1661; sequence GGVLWDIPIA…GGEGVTEEPL (181 aa). Catalysis depends on charge relay system; for serine protease NS3 activity residues His1532, Asp1556, and Ser1617. Residues 1665 to 1821 enclose the Helicase ATP-binding domain; it reads ATMLRKGKLT…ESNGEIEDLR (157 aa). The important for RNA-binding stretch occupies residues 1669–1672; the sequence is RKGK. Residue 1678–1685 coordinates ATP; sequence YHPGAGKT. Positions 1769 to 1772 match the DEAH box motif; the sequence is DEAH. Residues 1816-1995 enclose the Helicase C-terminal domain; sequence EIEDLRRDIP…GMVAPLYDVE (180 aa). The chain crosses the membrane as a helical span at residues 2155–2175; the sequence is ILLMTGIVVACTLGVGLAFMW. Residues 2176 to 2181 lie on the Lumenal side of the membrane; it reads PKGVDK. Positions 2182 to 2200 form an intramembrane region, helical; the sequence is MSMGMITMSIAGYLMLQGG. Position 2201 (Leu2201) is a topological domain, lumenal. Residues 2202-2222 form a helical membrane-spanning segment; that stretch reads TPVQVASVLLIFFIFMVVLIP. The Cytoplasmic portion of the chain corresponds to 2223-2235; that stretch reads EAGTQRSINDNKT. A helical transmembrane segment spans residues 2236 to 2250; that stretch reads LYVLLGVALLIGAIT. Residues 2251–2285 lie on the Cytoplasmic side of the membrane; the sequence is ANEMGYLEKTKRDLLGERVQNEWKLELPMFDLRPG. Residues 2286–2306 constitute an intramembrane region (helical); the sequence is AAWSIYVGLATLVMPVLDHWI. The Lumenal segment spans residues 2307-2354; that stretch reads RTEYGSLSLTGIAQQASILQAMDKGVPFFKLNMSVIVLLVSVWNNFSM. Residues 2355-2375 traverse the membrane as a helical segment; that stretch reads LSVLCGVGLLGVHCAFVLPGL. Residues 2376 to 2418 are Cytoplasmic-facing; it reads RAQAAKQAQRRVYHGVAKNPVVDGQTTAEIETAPEMPPLYEKK. The chain crosses the membrane as a helical span at residues 2419–2439; the sequence is LALVLLGVVAIANGVMVRSAF. Topologically, residues 2440 to 2467 are lumenal; it reads SMAETVVLLSAAVGPLLEGNTSAIWNGP. Residues 2468 to 2488 traverse the membrane as a helical segment; the sequence is MAVAMAGIMRGNYYAGIGLAY. Residues 2489–3401 lie on the Cytoplasmic side of the membrane; it reads NLWILQSPKR…YSVQEVGTVL (913 aa). An mRNA cap 0-1 NS5-type MT domain is found at 2499 to 2763; that stretch reads GRSTTMTLGE…DVVFPTGTRN (265 aa). Residue Ser2554 coordinates S-adenosyl-L-methionine. Phosphoserine is present on Ser2554. Lys2559 functions as the For 2'-O-MTase activity in the catalytic mechanism. Positions 2584, 2585, 2602, 2603, 2629, and 2630 each coordinate S-adenosyl-L-methionine. Asp2644 (for 2'-O-MTase activity) is an active-site residue. An S-adenosyl-L-methionine-binding site is contributed by Ile2645. Residues Lys2680 and Glu2716 each act as for 2'-O-MTase activity in the active site. Tyr2718 lines the S-adenosyl-L-methionine pocket. Positions 2869 to 2902 match the Nuclear localization signal motif; sequence RAIMEVVNKWMFDFLAREKAPRICTKEEFINKVR. Zn(2+)-binding residues include Glu2936, His2940, Cys2945, and Cys2948. Positions 3026–3178 constitute a RdRp catalytic domain; sequence GIMYADDTAG…APLDERFGLA (153 aa). The Zn(2+) site is built by His3213, Cys3229, and Cys3348.

The protein in the N-terminal section; belongs to the class I-like SAM-binding methyltransferase superfamily. mRNA cap 0-1 NS5-type methyltransferase family. In terms of assembly, homodimer. Interacts (via N-terminus) with host EXOC1 (via C-terminus); this interaction results in EXOC1 degradation through the proteasome degradation pathway. As to quaternary structure, forms heterodimers with envelope protein E in the endoplasmic reticulum and Golgi. Homodimer; in the endoplasmic reticulum and Golgi. Interacts with protein prM. Interacts with non-structural protein 1. In terms of assembly, homodimer; Homohexamer when secreted. Interacts with envelope protein E. NS1 interacts with NS4B. Interacts with host complement protein CFH; this interaction leads to the degradation of C3. As to quaternary structure, interacts (via N-terminus) with serine protease NS3. Forms a heterodimer with serine protease NS3. May form homooligomers. In terms of assembly, forms a heterodimer with NS2B. Interacts with non-structural protein 2A (via N-terminus). Interacts with NS4B. Interacts with unphosphorylated RNA-directed RNA polymerase NS5; this interaction stimulates RNA-directed RNA polymerase NS5 guanylyltransferase activity. NS3 interacts with host PDCD6IP; this interaction contributes to virion release. As to quaternary structure, interacts with serine protease NS3. Homodimer. Interacts with host STAT2; this interaction prevents the establishment of cellular antiviral state. Interacts with serine protease NS3. Interacts with host TRIM23; this interaction leads to NS5 ubiquitination. In terms of processing, specific enzymatic cleavages in vivo yield mature proteins. The nascent capsid protein C contains a C-terminal hydrophobic domain that act as a signal sequence for translocation of prM into the lumen of the ER. Mature capsid protein C is cleaved at a site upstream of this hydrophobic domain by NS3. prM is cleaved in post-Golgi vesicles by a host furin, releasing the mature small envelope protein M, and peptide pr. Non-structural protein 2A-alpha, a C-terminally truncated form of non-structural protein 2A, results from partial cleavage by NS3. Specific enzymatic cleavages in vivo yield mature proteins peptide 2K acts as a signal sequence and is removed from the N-terminus of NS4B by the host signal peptidase in the ER lumen. Signal cleavage at the 2K-4B site requires a prior NS3 protease-mediated cleavage at the 4A-2K site. Post-translationally, cleaved in post-Golgi vesicles by a host furin, releasing the mature small envelope protein M, and peptide pr. This cleavage is incomplete as up to 30% of viral particles still carry uncleaved prM. N-glycosylated. In terms of processing, N-glycosylated. The excreted form is glycosylated and this is required for efficient secretion of the protein from infected cells. Post-translationally, polyubiquitinated; ubiquitination is probably mediated by host TRIM23 and is prerequisite for NS5-STAT2 interaction. NS5 is not ISGylated or sumoylated. Phosphorylated on serines residues. This phosphorylation may trigger NS5 nuclear localization.

Its subcellular location is the virion. The protein resides in the host nucleus. The protein localises to the host cytoplasm. It is found in the host perinuclear region. It localises to the virion membrane. Its subcellular location is the host endoplasmic reticulum membrane. The protein resides in the secreted. The enzyme catalyses Selective hydrolysis of -Xaa-Xaa-|-Yaa- bonds in which each of the Xaa can be either Arg or Lys and Yaa can be either Ser or Ala.. It carries out the reaction RNA(n) + a ribonucleoside 5'-triphosphate = RNA(n+1) + diphosphate. The catalysed reaction is a ribonucleoside 5'-triphosphate + H2O = a ribonucleoside 5'-diphosphate + phosphate + H(+). It catalyses the reaction ATP + H2O = ADP + phosphate + H(+). The enzyme catalyses a 5'-end (5'-triphosphoguanosine)-ribonucleoside in mRNA + S-adenosyl-L-methionine = a 5'-end (N(7)-methyl 5'-triphosphoguanosine)-ribonucleoside in mRNA + S-adenosyl-L-homocysteine. It carries out the reaction a 5'-end (N(7)-methyl 5'-triphosphoguanosine)-ribonucleoside in mRNA + S-adenosyl-L-methionine = a 5'-end (N(7)-methyl 5'-triphosphoguanosine)-(2'-O-methyl-ribonucleoside) in mRNA + S-adenosyl-L-homocysteine + H(+). Functionally, plays a role in virus budding by binding to the cell membrane and gathering the viral RNA into a nucleocapsid that forms the core of a mature virus particle. During virus entry, may induce genome penetration into the host cytoplasm after hemifusion induced by the surface proteins. Can migrate to the cell nucleus where it modulates host functions. In terms of biological role, inhibits RNA silencing by interfering with host Dicer. Prevents premature fusion activity of envelope proteins in trans-Golgi by binding to envelope protein E at pH6.0. After virion release in extracellular space, gets dissociated from E dimers. Its function is as follows. Acts as a chaperone for envelope protein E during intracellular virion assembly by masking and inactivating envelope protein E fusion peptide. prM is the only viral peptide matured by host furin in the trans-Golgi network probably to avoid catastrophic activation of the viral fusion activity in acidic Golgi compartment prior to virion release. prM-E cleavage is inefficient, and many virions are only partially matured. These uncleaved prM would play a role in immune evasion. Functionally, may play a role in virus budding. Exerts cytotoxic effects by activating a mitochondrial apoptotic pathway through M ectodomain. May display a viroporin activity. In terms of biological role, binds to host cell surface receptor and mediates fusion between viral and cellular membranes. Envelope protein is synthesized in the endoplasmic reticulum in the form of heterodimer with protein prM. They play a role in virion budding in the ER, and the newly formed immature particle is covered with 60 spikes composed of heterodimer between precursor prM and envelope protein E. The virion is transported to the Golgi apparatus where the low pH causes dissociation of PrM-E heterodimers and formation of E homodimers. prM-E cleavage is inefficient, and many virions are only partially matured. These uncleaved prM would play a role in immune evasion. Involved in immune evasion, pathogenesis and viral replication. Once cleaved off the polyprotein, is targeted to three destinations: the viral replication cycle, the plasma membrane and the extracellular compartment. Essential for viral replication. Required for formation of the replication complex and recruitment of other non-structural proteins to the ER-derived membrane structures. Excreted as a hexameric lipoparticle that plays a role against host immune response. Antagonizing the complement function. Binds to the host macrophages and dendritic cells. Inhibits signal transduction originating from Toll-like receptor 3 (TLR3). Its function is as follows. Component of the viral RNA replication complex that functions in virion assembly and antagonizes the host immune response. Functionally, required cofactor for the serine protease function of NS3. May have membrane-destabilizing activity and form viroporins. In terms of biological role, displays three enzymatic activities: serine protease, NTPase and RNA helicase. NS3 serine protease, in association with NS2B, performs its autocleavage and cleaves the polyprotein at dibasic sites in the cytoplasm: C-prM, NS2A-NS2B, NS2B-NS3, NS3-NS4A, NS4A-2K and NS4B-NS5. NS3 RNA helicase binds RNA and unwinds dsRNA in the 3' to 5' direction. Also plays a role in virus assembly. Regulates the ATPase activity of the NS3 helicase activity. NS4A allows NS3 helicase to conserve energy during unwinding. Its function is as follows. Functions as a signal peptide for NS4B and is required for the interferon antagonism activity of the latter. Functionally, induces the formation of ER-derived membrane vesicles where the viral replication takes place. Inhibits interferon (IFN)-induced host STAT1 phosphorylation and nuclear translocation, thereby preventing the establishment of cellular antiviral state by blocking the IFN-alpha/beta pathway. In terms of biological role, replicates the viral (+) and (-) RNA genome, and performs the capping of genomes in the cytoplasm. NS5 methylates viral RNA cap at guanine N-7 and ribose 2'-O positions. Besides its role in RNA genome replication, also prevents the establishment of cellular antiviral state by blocking the interferon-alpha/beta (IFN-alpha/beta) signaling pathway. IFN-I induces binding of NS5 to host IFN-activated transcription factor STAT2, preventing its transcriptional activity. Host TRIM23 is the E3 ligase that interacts with and polyubiquitinates NS5 to promote its binding to STAT2 and trigger IFN-I signaling inhibition. This chain is Genome polyprotein, found in Edge Hill virus (EHV).